The chain runs to 430 residues: Serine--tRNA ligase (430 aa).

Residue 231–233 (TSE) coordinates L-serine. 262-264 (RSE) contacts ATP. Position 285 (glutamate 285) interacts with L-serine. 349 to 352 (EISS) contributes to the ATP binding site. Residue serine 385 participates in L-serine binding.

This sequence belongs to the class-II aminoacyl-tRNA synthetase family. Type-1 seryl-tRNA synthetase subfamily. In terms of assembly, homodimer. The tRNA molecule binds across the dimer.

It localises to the cytoplasm. The enzyme catalyses tRNA(Ser) + L-serine + ATP = L-seryl-tRNA(Ser) + AMP + diphosphate + H(+). It carries out the reaction tRNA(Sec) + L-serine + ATP = L-seryl-tRNA(Sec) + AMP + diphosphate + H(+). It participates in aminoacyl-tRNA biosynthesis; selenocysteinyl-tRNA(Sec) biosynthesis; L-seryl-tRNA(Sec) from L-serine and tRNA(Sec): step 1/1. Its function is as follows. Catalyzes the attachment of serine to tRNA(Ser). Is also able to aminoacylate tRNA(Sec) with serine, to form the misacylated tRNA L-seryl-tRNA(Sec), which will be further converted into selenocysteinyl-tRNA(Sec). The chain is Serine--tRNA ligase from Jannaschia sp. (strain CCS1).